The following is a 124-amino-acid chain: ATP synthase subunit H, mitochondrial (124 aa).

The transit peptide at 1 to 32 (MFPIASRRILLNASVLPLRLCNRNFTTTRISY) directs the protein to the mitochondrion. A disordered region spans residues 89–124 (NVETAHVAKESEEGESEPIEEDWLVLDDAEETKESH). Residues 100-124 (EEGESEPIEEDWLVLDDAEETKESH) show a composition bias toward acidic residues.

Belongs to the ATPase h subunit family. In terms of assembly, F-type ATPases have 2 components, CF(1) - the catalytic core - and CF(0) - the membrane proton channel. In yeast, the dimeric form of ATP synthase consists of 17 polypeptides: alpha, beta, gamma, delta, epsilon, 4 (B), 5 (OSCP), 6 (A), 8, 9 (C), d, E (Tim11), f, g, h, i/j and k.

The protein localises to the mitochondrion. It is found in the mitochondrion inner membrane. Its function is as follows. Mitochondrial membrane ATP synthase (F(1)F(0) ATP synthase or Complex V) produces ATP from ADP in the presence of a proton gradient across the membrane which is generated by electron transport complexes of the respiratory chain. F-type ATPases consist of two structural domains, F(1) - containing the extramembraneous catalytic core and F(0) - containing the membrane proton channel, linked together by a central stalk and a peripheral stalk. During catalysis, ATP synthesis in the catalytic domain of F(1) is coupled via a rotary mechanism of the central stalk subunits to proton translocation. Part of the complex F(0) domain. Minor subunit located with subunit a in the membrane. The sequence is that of ATP synthase subunit H, mitochondrial (ATP14) from Saccharomyces cerevisiae (strain ATCC 204508 / S288c) (Baker's yeast).